Reading from the N-terminus, the 279-residue chain is QLHCAGKAKRSGSHAPLVRELLLDALSPEQLVLTLLEAEPPHVLISRPSAPFTEASMMMSLTKLADKELVHMISWAKKIPGFVELSLFDQVRLLESCWMEVLMVGLMWRSIDHPGKLIFAPDLVLDRDEGKCVEGILEIFDMLLATTSRFRELKLQHKEYLCVKAMILLNSNMYPLVTATQDADSSRKLAHLLNAVTDALVWVIAKSGISSQQQSMRLANLLMLLSHVRHASNKGMEHLLSMKCKNVVPVYDLLLEMLNAHVLRGCKSSITGSECSPAE.

The NR LBD domain occupies S27–H261.

This sequence belongs to the nuclear hormone receptor family. NR3 subfamily. In terms of assembly, binds DNA as a homodimer. Can form a heterodimer with ESR1. Interacts with NCOA1, NCOA3, NCOA5 and NCOA6 coactivators, leading to a strong increase of transcription of target genes. Interacts with UBE1C and AKAP13. Interacts with DNTTIP2. Interacts with CCDC62 in the presence of estradiol/E2; this interaction seems to enhance the transcription of target genes. Interacts with DNAAF4. Interacts with PRMT2. Interacts with CCAR2 (via N-terminus) in a ligand-independent manner. Interacts with RBM39, in the presence of estradiol (E2). Interacts with STUB1/CHIP.

Its subcellular location is the nucleus. Its function is as follows. Nuclear hormone receptor. Binds estrogens with an affinity similar to that of ESR1/ER-alpha, and activates expression of reporter genes containing estrogen response elements (ERE) in an estrogen-dependent manner. This chain is Estrogen receptor beta (ESR2), found in Macaca mulatta (Rhesus macaque).